Here is a 597-residue protein sequence, read N- to C-terminus: Sodium/mannose cotransporter SLC5A10 (597 aa).

The Extracellular segment spans residues 1–16; that stretch reads MVADNSTSDPHAPGPQ. N-linked (GlcNAc...) asparagine glycosylation is present at asparagine 5. Residues 17–37 traverse the membrane as a helical segment; the sequence is LSVTDIVVITVYFALNVAVGI. Residues 38-73 are Cytoplasmic-facing; it reads WSSCRASRNTVSGYFLAGRDMTWWPIGASLFGSSEG. Serine 49 carries the phosphoserine modification. A helical membrane pass occupies residues 74–94; sequence SGLFIGLAGSGAAGGLAVAGF. Residues 95–100 lie on the Extracellular side of the membrane; that stretch reads DWNATY. A helical transmembrane segment spans residues 101-121; the sequence is VLLALAWVFGAIYISSEIVTL. At 122 to 137 the chain is on the cytoplasmic side; it reads AEYIQKRFGGQRIRMY. A helical transmembrane segment spans residues 138–158; it reads LSVLSLLLSVFTKISLDLYAG. Over 159-171 the chain is Extracellular; sequence ALFVHICLGWNFY. The chain crosses the membrane as a helical span at residues 172–194; that stretch reads LSTILTLTITALYTITGGLVAVI. Topologically, residues 195–200 are cytoplasmic; sequence YTDALQ. The helical transmembrane segment at 201 to 219 threads the bilayer; it reads TLIMVVGAVILAIKAFHQI. At 220–265 the chain is on the extracellular side; it reads DGYGQMEAAYARAIPSRTVANTTCHLPRADAMHMFRDPYTGDLPWT. A helical membrane pass occupies residues 266 to 286; it reads GMTFGLTIMATWYWCTDQVIV. Over 287–301 the chain is Cytoplasmic; it reads QRSLSARNLNHAKAG. A helical transmembrane segment spans residues 302–322; the sequence is SILASYLKMLPMGLMIMPGMI. The Extracellular segment spans residues 323–367; that stretch reads SRALFPDEVGCVVPSECLRACGAEIGCSNIAYPKLVMELMPVGLR. A helical membrane pass occupies residues 368 to 390; the sequence is GLMIAVMMPALMSSLSSIFNSSS. The Cytoplasmic portion of the chain corresponds to 391 to 410; the sequence is TLFTMDIWRRLRPCASEREL. Residues 411 to 431 traverse the membrane as a helical segment; sequence LLVGRLVIVVLIGVSVAWIPV. Over 432–444 the chain is Extracellular; the sequence is LQGSNGGQLFIYM. A helical transmembrane segment spans residues 445–465; the sequence is QSVTSSLAPPVTAVFTLGIFW. The Cytoplasmic segment spans residues 466-472; sequence QRANEQG. Residues 473-493 form a helical membrane-spanning segment; that stretch reads AFWGLLAGLAVGATRLVLEFL. Residues 494-514 are Extracellular-facing; it reads HPAPPCGAADTRPAVLSQLHY. The chain crosses the membrane as a helical span at residues 515–535; that stretch reads LHFAVALFVLTGAVAVGGSLL. Topologically, residues 536 to 576 are cytoplasmic; sequence TPPPRRHQIENLTWWTLTRDLSLGAKAGDGQTPQRYTFWAR. The chain crosses the membrane as a helical span at residues 577 to 597; it reads VCGFNAILLMCVNIFFYAYFA.

Belongs to the sodium:solute symporter (SSF) (TC 2.A.21) family. In terms of tissue distribution, expressed only in kidney.

Its subcellular location is the apical cell membrane. It catalyses the reaction D-mannose(out) + Na(+)(out) = D-mannose(in) + Na(+)(in). The enzyme catalyses D-fructopyranose(out) + Na(+)(out) = D-fructopyranose(in) + Na(+)(in). Functionally, electrogenic Na+-coupled sugar symporter that actively transports D-mannose or D-fructose at the plasma membrane, with a Na+ to sugar coupling ratio of 1:1. Transporter activity is driven by a transmembrane Na+ electrochemical gradient set by the Na+/K+ pump. Exclusively recognizes sugar substrates having a pyranose ring with an axial hydroxyl group on carbon 2. Has likely evolved to enable renal reabsorption of D-mannose, an important constituent of oligosaccharide chains of glycoproteins. Contributes to dietary D-fructose reabsorption from glomerular filtrate across the brush border of the kidney. The protein is Sodium/mannose cotransporter SLC5A10 (SLC5A10) of Oryctolagus cuniculus (Rabbit).